Here is a 419-residue protein sequence, read N- to C-terminus: Phospho-N-acetylmuramoyl-pentapeptide-transferase (419 aa).

The next 10 helical transmembrane spans lie at 22-42 (YVSF…TVIG), 72-92 (TPTM…LLLA), 99-119 (ILLM…DDYI), 135-155 (IIGQ…NPAV), 208-228 (VLFG…FISN), 238-258 (GLAT…AYVS), 278-298 (LTIF…YNAY), 303-323 (FMGD…ALII), 328-348 (LLPI…IQVF), and 396-416 (KITV…IATL).

This sequence belongs to the glycosyltransferase 4 family. MraY subfamily. Requires Mg(2+) as cofactor.

It is found in the cell inner membrane. The catalysed reaction is UDP-N-acetyl-alpha-D-muramoyl-L-alanyl-gamma-D-glutamyl-meso-2,6-diaminopimeloyl-D-alanyl-D-alanine + di-trans,octa-cis-undecaprenyl phosphate = di-trans,octa-cis-undecaprenyl diphospho-N-acetyl-alpha-D-muramoyl-L-alanyl-D-glutamyl-meso-2,6-diaminopimeloyl-D-alanyl-D-alanine + UMP. Its pathway is cell wall biogenesis; peptidoglycan biosynthesis. Functionally, catalyzes the initial step of the lipid cycle reactions in the biosynthesis of the cell wall peptidoglycan: transfers peptidoglycan precursor phospho-MurNAc-pentapeptide from UDP-MurNAc-pentapeptide onto the lipid carrier undecaprenyl phosphate, yielding undecaprenyl-pyrophosphoryl-MurNAc-pentapeptide, known as lipid I. In Porphyromonas gingivalis (strain ATCC 33277 / DSM 20709 / CIP 103683 / JCM 12257 / NCTC 11834 / 2561), this protein is Phospho-N-acetylmuramoyl-pentapeptide-transferase.